A 270-amino-acid polypeptide reads, in one-letter code: Undecaprenyl-diphosphatase (270 aa).

7 helical membrane-spanning segments follow: residues 3 to 23 (TIVT…LPVS), 42 to 62 (WAMF…VQYW), 86 to 106 (LLAA…YIDV), 108 to 128 (LGSP…ILVI), 184 to 204 (AEFS…LELL), 217 to 237 (VGWS…LAVI), and 249 to 269 (FKPF…WLAM).

Belongs to the UppP family.

It localises to the cell inner membrane. The catalysed reaction is di-trans,octa-cis-undecaprenyl diphosphate + H2O = di-trans,octa-cis-undecaprenyl phosphate + phosphate + H(+). Functionally, catalyzes the dephosphorylation of undecaprenyl diphosphate (UPP). Confers resistance to bacitracin. In Novosphingobium aromaticivorans (strain ATCC 700278 / DSM 12444 / CCUG 56034 / CIP 105152 / NBRC 16084 / F199), this protein is Undecaprenyl-diphosphatase.